The sequence spans 75 residues: Large ribosomal subunit protein bL31 (75 aa).

Belongs to the bacterial ribosomal protein bL31 family. Type A subfamily. As to quaternary structure, part of the 50S ribosomal subunit.

Its function is as follows. Binds the 23S rRNA. The polypeptide is Large ribosomal subunit protein bL31 (Zymomonas mobilis subsp. mobilis (strain ATCC 31821 / ZM4 / CP4)).